The primary structure comprises 445 residues: Methyl-CpG-binding domain protein 4-like protein (445 aa).

The active site involves D429.

Isoform 1 and isoform 4: Expressed in leaves and flowers, but not in roots or stems.

It is found in the nucleus. In terms of biological role, monofunctional DNA glycosylase targeting U:G and T:G mispairs. Excises uracil derivatives and exhibits a preference for a CpG sequence context, irrespective of the methylation status of the complementary strand. The activity follows a biphasic kinetics, with an initial burst of product accumulation followed by a slower phase. Specifically binds its reaction product. Triggers the base excision repair (BER) pathway. This Arabidopsis thaliana (Mouse-ear cress) protein is Methyl-CpG-binding domain protein 4-like protein.